Reading from the N-terminus, the 446-residue chain is Histidine--tRNA ligase (446 aa).

The protein belongs to the class-II aminoacyl-tRNA synthetase family. As to quaternary structure, homodimer.

The protein resides in the cytoplasm. It catalyses the reaction tRNA(His) + L-histidine + ATP = L-histidyl-tRNA(His) + AMP + diphosphate + H(+). This chain is Histidine--tRNA ligase, found in Burkholderia pseudomallei (strain K96243).